Consider the following 630-residue polypeptide: A-type voltage-gated potassium channel KCND2 (630 aa).

The Cytoplasmic portion of the chain corresponds to 1–184 (MAAGVAAWLP…FENPHTSTMA (184 aa)). The interaction with KCNIP1, KCNIP2, and other family members stretch occupies residues 2 to 20 (AAGVAAWLPFARAAAIGWM). Threonine 38 carries the post-translational modification Phosphothreonine. Residues 71-90 (ERDFFYHPETQQYFFDRDPD) form an interaction with KCNIP1 region. Positions 105, 111, 132, and 133 each coordinate Zn(2+). A helical transmembrane segment spans residues 185–206 (LVFYYVTGFFIAVSVIANVVET). Topologically, residues 207 to 226 (VPCGSSPGHIKELPCGERYA) are extracellular. The helical transmembrane segment at 227-249 (VAFFCLDTACVMIFTVEYLLRLA) threads the bilayer. Over 250 to 256 (AAPSRYR) the chain is Cytoplasmic. The helical transmembrane segment at 257 to 281 (FVRSVMSIIDVVAILPYYIGLVMTD) threads the bilayer. At 282 to 287 (NEDVSG) the chain is on the extracellular side. The helical; Voltage-sensor transmembrane segment at 288 to 307 (AFVTLRVFRVFRIFKFSRHS) threads the bilayer. Residues 308–321 (QGLRILGYTLKSCA) lie on the Cytoplasmic side of the membrane. The segment at 308–321 (QGLRILGYTLKSCA) is S4-S5 linker. A helical membrane pass occupies residues 322–345 (SELGFLLFSLTMAIIIFATVMFYA). The Extracellular segment spans residues 346 to 357 (EKGSSASKFTSI). The helical intramembrane region spans 358–369 (PAAFWYTIVTMT). Positions 370, 371, 372, and 373 each coordinate K(+). Residues 370 to 375 (TLGYGD) carry the Selectivity filter motif. An intramembrane segment occupies 370–377 (TLGYGDMV). Over 378–380 (PKT) the chain is Extracellular. The chain crosses the membrane as a helical span at residues 381–403 (IAGKIFGSICSLSGVLVIALPVP). At 404–630 (VIVSNFSRIY…GGNIVRVSAL (227 aa)) the chain is on the cytoplasmic side. The segment at 474 to 489 (FETQHHHLLHCLEKTT) is required for dendritic targeting. An important for normal channel activation and inactivation, for interaction with KCNIP2, and probably other family members as well region spans residues 474–630 (FETQHHHLLH…GGNIVRVSAL (157 aa)). Serine 548, serine 552, serine 572, and serine 575 each carry phosphoserine. A disordered region spans residues 600–622 (IPTPPVTTPEGDDRPESPEYSGG). Phosphothreonine occurs at positions 602 and 607. Serine 616 bears the Phosphoserine mark. The short motif at 627–630 (VSAL) is the PDZ-binding element.

Belongs to the potassium channel family. D (Shal) (TC 1.A.1.2) subfamily. Kv4.2/KCND2 sub-subfamily. Homotetramer or heterotetramer with KCND1 or KCND3. Associates with the regulatory subunits KCNIP2, KCNIP3 and KCNIP4. Interacts with the regulatory subunit KCNIP1; this interaction mediates the capture of both the N- and C-terminus of KCND2, preventing N-type inactivation and stabilizing the S6 conformation, thereby accelerating closed state inactivation and recovery. In vivo, probably exists as heteromeric complex containing variable proportions of KCND1, KCND2, KCND3, KCNIP1, KCNIP2, KCNIP3, KCNIP4, DPP6 and DPP10. The tetrameric channel can associate with up to four regulatory subunits, such as KCNIP2 or KCNIP4. Interaction with four KCNIP4 chains does not reduce interaction with DPP10. Interacts with DLG4 and NCS1/FREQ. Interacts with DLG1. Probably part of a complex consisting of KCNIP1, KCNIP2 isoform 3 and KCND2. Interacts with FLNA, FLNC and DPP10. Identified in a complex with cAMP-dependent protein kinase (PKA), CAV3, AKAP6 and KCND3 in cardiac myocytes. Interacts (via S1 and S2 helices) with DPP6; this interaction stabilizes the conformation of the S1-S2 helices and facilitates S4 conformational change, including S4 sliding up and down, thereby accelerating activation, inactivation, and recovery. In terms of processing, phosphorylation in response to MAPK activation is increased in stimulated dendrites. Interaction with KCNIP2 and DPP6 propomtes phosphorylation by PKA at Ser-552. Phosphorylation at Ser-552 has no effect on interaction with KCNIP3, but is required for the regulation of channel activity by KCNIP3. Phosphorylation at Ser-552 leads to KCND2 internalization. Phosphorylated by MAPK in response to signaling via the metabotropic glutamate receptor GRM5. Phosphorylation at Ser-616 is required for the down-regulation of neuronal A-type currents in response to signaling via GRM5.

Its subcellular location is the cell membrane. It localises to the cell projection. It is found in the dendrite. The protein resides in the synapse. The protein localises to the perikaryon. Its subcellular location is the postsynaptic cell membrane. It localises to the dendritic spine. It is found in the sarcolemma. The protein resides in the cell junction. The protein localises to the membrane. Its subcellular location is the caveola. The catalysed reaction is K(+)(in) = K(+)(out). In terms of biological role, voltage-gated potassium channel that mediates transmembrane potassium transport in excitable membranes, primarily in the brain, but also in rodent heart. Mediates the major part of the dendritic A-type current I(SA) in brain neurons. This current is activated at membrane potentials that are below the threshold for action potentials. It regulates neuronal excitability, prolongs the latency before the first spike in a series of action potentials, regulates the frequency of repetitive action potential firing, shortens the duration of action potentials and regulates the back-propagation of action potentials from the neuronal cell body to the dendrites. Contributes to the regulation of the circadian rhythm of action potential firing in suprachiasmatic nucleus neurons, which regulates the circadian rhythm of locomotor activity. Functions downstream of the metabotropic glutamate receptor GRM5 and plays a role in neuronal excitability and in nociception mediated by activation of GRM5. Mediates the transient outward current I(to) in rodent heart left ventricle apex cells, but not in human heart, where this current is mediated by another family member. Forms tetrameric potassium-selective channels through which potassium ions pass in accordance with their electrochemical gradient. The channel alternates between opened and closed conformations in response to the voltage difference across the membrane. Can form functional homotetrameric channels and heterotetrameric channels that contain variable proportions of KCND2 and KCND3; channel properties depend on the type of pore-forming alpha subunits that are part of the channel. In vivo, membranes probably contain a mixture of heteromeric potassium channel complexes. Interaction with specific isoforms of the regulatory subunits KCNIP1, KCNIP2, KCNIP3 or KCNIP4 strongly increases expression at the cell surface and thereby increases channel activity; it modulates the kinetics of channel activation and inactivation, shifts the threshold for channel activation to more negative voltage values, shifts the threshold for inactivation to less negative voltages and accelerates recovery after inactivation. Likewise, interaction with DPP6 or DPP10 promotes expression at the cell membrane and regulates both channel characteristics and activity. Upon depolarization, the channel goes from a resting closed state (C state) to an activated but non-conducting state (C* state), from there, the channel may either inactivate (I state) or open (O state). This is A-type voltage-gated potassium channel KCND2 from Mustela putorius furo (European domestic ferret).